The following is a 243-amino-acid chain: tRNA (guanine-N(1)-)-methyltransferase (243 aa).

Residues G108 and 127–132 (LGDFVL) each bind S-adenosyl-L-methionine.

This sequence belongs to the RNA methyltransferase TrmD family. In terms of assembly, homodimer.

The protein localises to the cytoplasm. The enzyme catalyses guanosine(37) in tRNA + S-adenosyl-L-methionine = N(1)-methylguanosine(37) in tRNA + S-adenosyl-L-homocysteine + H(+). Specifically methylates guanosine-37 in various tRNAs. In Streptococcus pyogenes serotype M5 (strain Manfredo), this protein is tRNA (guanine-N(1)-)-methyltransferase.